We begin with the raw amino-acid sequence, 120 residues long: Holo-[acyl-carrier-protein] synthase (120 aa).

Mg(2+)-binding residues include Asp8 and Glu60.

This sequence belongs to the P-Pant transferase superfamily. AcpS family. Requires Mg(2+) as cofactor.

It localises to the cytoplasm. It carries out the reaction apo-[ACP] + CoA = holo-[ACP] + adenosine 3',5'-bisphosphate + H(+). Its function is as follows. Transfers the 4'-phosphopantetheine moiety from coenzyme A to a Ser of acyl-carrier-protein. The polypeptide is Holo-[acyl-carrier-protein] synthase (Anaplasma marginale (strain Florida)).